Consider the following 589-residue polypeptide: SLKQSQESSEYEIAYRSTIQPRTAVRTQSRQSGAYSTGAVSGGGGRVLKMVTEMGSASIGGISPALSANAAKSFLEATDKEKKEMQGLNDRLGNYIDRVKKLEEQNRKLVADLDELRGRWGKDTSEIKIQYSDSLRDARKEIDDGARRKAEIDVKVARLRDDLAELRNRYEDVQHRRESDREKINQWQHAIEDAQSELEMLRARWRQLTEEEKRLNGDNARIWEELQKARNDLDEETLGRIDFQNQVQTLMEELEFLRRVHEQEVKELQALLAQAPADTREFFKNELALAIRDIKDEYDYIAKQGKQDMESWYKLKVSEVQGSANRANMESSYQREEVKRMRDNIGDLRGKLGDLEAKNALLEKEVQNLNYQLNDDQRQYEAALNDRDATLRRMREECQTLVAELQALLDTKQMLDAEIAIYRKMLEGEESRVGLRQMVEQVVKTHSLQQQEDTDSTRNVRGEVSTKTTFQRSAKGNVTISECDPNGKFITLENTHRSKDENLGEHRLKRKLDNRREIVYTIPPNTVLKAGRTMKIYARDQGGIHNPPDTLVFDGENTWGIGANVVTSLINKDGDERATHTQKTIQTGQ.

The segment at 1 to 84 is head; it reads SLKQSQESSE…LEATDKEKKE (84 aa). In terms of domain architecture, IF rod spans 81–433; the sequence is EKKEMQGLND…KMLEGEESRV (353 aa). Residues 85–116 form a coil 1A region; sequence MQGLNDRLGNYIDRVKKLEEQNRKLVADLDEL. A linker 1 region spans residues 117 to 130; it reads RGRWGKDTSEIKIQ. A coil 1B region spans residues 131–268; it reads YSDSLRDARK…RVHEQEVKEL (138 aa). The tract at residues 269 to 285 is linker 12; sequence QALLAQAPADTREFFKN. Residues 286 to 433 are coil 2; sequence ELALAIRDIK…KMLEGEESRV (148 aa). A tail region spans residues 434 to 589; the sequence is GLRQMVEQVV…HTQKTIQTGQ (156 aa). Residues 446 to 470 are disordered; sequence HSLQQQEDTDSTRNVRGEVSTKTTF. Positions 466–584 constitute an LTD domain; that stretch reads TKTTFQRSAK…DERATHTQKT (119 aa).

Belongs to the intermediate filament family. As to quaternary structure, a and B can form homopolymers. As to expression, giant body muscle cells.

The protein localises to the cytoplasm. In Ascaris suum (Pig roundworm), this protein is Intermediate filament protein B.